The chain runs to 1490 residues: Leucine-rich repeat-containing protein 7 (1490 aa).

LRR repeat units follow at residues 23-44 (IISV…VFNF), 47-68 (TLEE…LFNC), 70-91 (ALRK…IASL), 93-114 (NLKE…IKCC), 116-137 (CLTI…FTQL), 139-161 (NLTQ…GRLV), 162-183 (KLRI…MHKL), 185-206 (QLER…LDQI), 208-229 (NLRE…IGKL), 231-253 (MLVY…SGCE), 254-275 (ALED…IGLL), 277-298 (KLTT…IGNL), 300-321 (LLEE…IGYL), 323-344 (SLRT…IGSC), 346-367 (NVTV…IGQM), 369-391 (RLRV…TKLK), and 392-413 (ELAA…QTEA). Phosphoserine is present on residues serine 439, serine 441, and serine 443. The segment covering 663–676 (KKESTDESEVDKTH) has biased composition (basic and acidic residues). 3 disordered regions span residues 663–709 (KKES…VGSL), 775–808 (DNTG…HGRR), and 822–899 (ELEQ…YHDP). Positions 677-686 (CLNNSVSSGT) are enriched in polar residues. The span at 687 to 700 (YSDYSPSQASSASS) shows a compositional bias: low complexity. Polar residues predominate over residues 787 to 799 (ENANNNPLLSSKA). Threonine 831 is subject to Phosphothreonine. Phosphoserine is present on serine 850. Residues 859-871 (PSKLETTPTTSPL) show a composition bias toward low complexity. Threonine 865 is modified (phosphothreonine). Serine 869 bears the Phosphoserine mark. The segment covering 872 to 882 (PERKDHMKEPT) has biased composition (basic and acidic residues). Phosphoserine is present on residues serine 947, serine 949, and serine 1118. Arginine 1149 carries the post-translational modification Omega-N-methylarginine. Residues 1194–1217 (LTQRRPLSARSYSTESYGASQTRP) are compositionally biased toward polar residues. The tract at residues 1194–1218 (LTQRRPLSARSYSTESYGASQTRPV) is disordered. Serine 1233 carries the post-translational modification Phosphoserine. Disordered regions lie at residues 1238–1265 (GNYG…SCGK) and 1282–1312 (RLDR…PYPL). A compositionally biased stretch (basic and acidic residues) spans 1243-1263 (KTSDNSDIKTRPTPVKGEESC). Residues 1286–1307 (TPSQQSNILDNGQEDVSPSGQW) are compositionally biased toward polar residues. Serine 1288 and serine 1392 each carry phosphoserine. Residues 1398–1488 (EQFCVRIEKN…TVDLVIQREL (91 aa)) enclose the PDZ domain.

The protein belongs to the LAP (LRR and PDZ) protein family. As to quaternary structure, interacts with CNKSR2 and DLG4. Interacts with CTNND2/Catenin delta-2. Forms a complex with N-cadherin through CTNND2. Interacts with CAMK2A. In terms of processing, O-glycosylated and phosphorylated. Brain-specific. Highly concentrated at synapses.

It localises to the cytoplasm. The protein localises to the postsynaptic density. Required for normal synaptic spine architecture and function. Necessary for DISC1 and GRM5 localization to postsynaptic density complexes and for both N-methyl D-aspartate receptor-dependent and metabotropic glutamate receptor-dependent long term depression. The chain is Leucine-rich repeat-containing protein 7 (Lrrc7) from Rattus norvegicus (Rat).